Reading from the N-terminus, the 334-residue chain is Galactinol synthase 4 (334 aa).

Lys104 is a catalytic residue. Mn(2+) contacts are provided by Asp120, Asp122, and His258.

The protein belongs to the glycosyltransferase 8 family. Galactosyltransferase subfamily. The cofactor is a divalent metal cation.

It is found in the cytoplasm. The enzyme catalyses myo-inositol + UDP-alpha-D-galactose = alpha-D-galactosyl-(1-&gt;3)-1D-myo-inositol + UDP + H(+). In terms of biological role, galactinol synthase involved in the biosynthesis of raffinose family oligosaccharides (RFOs) that function as osmoprotectants. May promote plant stress tolerance. This Arabidopsis thaliana (Mouse-ear cress) protein is Galactinol synthase 4 (GOLS4).